A 325-amino-acid polypeptide reads, in one-letter code: MSEDNLQMVVVQAQNCGVLHVYVQGNLEERGGKTIILTVHDIGTNHKSFVRFVNHPSMATVKEKAIFLHVCVPGQEDNSADFFGDFPTLDGIGDDLSAVLDKFEVKSAIAFGEGVGANIICRFAMGHPNRIMGIVLVHCTSTTAGIIEYCKEKVMNMRLENSIMSDGAWDYLLAHKFGGESKSRQEYLEELKATLNPKNLSKYLVAFTKRTDLSSTIGTKLETVDALLVTGSKASHLHTVYTTHKSMNKKKTTLLVVDNVADVMQEAPDKLARSLILLCKGCGVLSGVAIPGMERQRTLSSSMEEADRPRRMSVTQPHLPPVPSA.

Positions 296–325 (QRTLSSSMEEADRPRRMSVTQPHLPPVPSA) are disordered.

This sequence belongs to the NDRG family.

This is an uncharacterized protein from Caenorhabditis elegans.